The sequence spans 277 residues: Endochitinase CHI (277 aa).

The first 31 residues, 1-31, serve as a signal peptide directing secretion; the sequence is MAKPTSRNDRFALFFITLIFLILTVSKPVAS. One can recognise a Chitin-binding type-1 domain in the interval 32 to 66; sequence QNCGCASDFCCSKYGYCGTTDEFCGEGCQAGPCRS. Intrachain disulfides connect C34-C42, C36-C48, C41-C55, and C59-C64. A catalytic region spans residues 75 to 277; that stretch reads VSLEGTVTPD…GVAPGDNLTC (203 aa). The Proton donor role is filled by E136. N274 is a glycosylation site (N-linked (GlcNAc...) asparagine).

Belongs to the glycosyl hydrolase 19 family. Chitinase class I subfamily.

The catalysed reaction is Random endo-hydrolysis of N-acetyl-beta-D-glucosaminide (1-&gt;4)-beta-linkages in chitin and chitodextrins.. The polypeptide is Endochitinase CHI (Arabidopsis thaliana (Mouse-ear cress)).